Consider the following 132-residue polypeptide: ATP synthase epsilon chain, chloroplastic (132 aa).

Belongs to the ATPase epsilon chain family. In terms of assembly, F-type ATPases have 2 components, CF(1) - the catalytic core - and CF(0) - the membrane proton channel. CF(1) has five subunits: alpha(3), beta(3), gamma(1), delta(1), epsilon(1). CF(0) has three main subunits: a, b and c.

It is found in the plastid. Its subcellular location is the chloroplast thylakoid membrane. Its function is as follows. Produces ATP from ADP in the presence of a proton gradient across the membrane. The sequence is that of ATP synthase epsilon chain, chloroplastic from Adiantum capillus-veneris (Maidenhair fern).